The sequence spans 207 residues: LexA repressor (207 aa).

Residues 28 to 48 (RAEIAQKLGFKSANAAEEHLK) constitute a DNA-binding region (H-T-H motif). Residues serine 124 and lysine 161 each act as for autocatalytic cleavage activity in the active site.

The protein belongs to the peptidase S24 family. In terms of assembly, homodimer.

It catalyses the reaction Hydrolysis of Ala-|-Gly bond in repressor LexA.. Functionally, represses a number of genes involved in the response to DNA damage (SOS response), including recA and lexA. In the presence of single-stranded DNA, RecA interacts with LexA causing an autocatalytic cleavage which disrupts the DNA-binding part of LexA, leading to derepression of the SOS regulon and eventually DNA repair. The polypeptide is LexA repressor (Aeromonas hydrophila subsp. hydrophila (strain ATCC 7966 / DSM 30187 / BCRC 13018 / CCUG 14551 / JCM 1027 / KCTC 2358 / NCIMB 9240 / NCTC 8049)).